A 509-amino-acid polypeptide reads, in one-letter code: Maturase K (509 aa).

The protein belongs to the intron maturase 2 family. MatK subfamily.

It localises to the plastid. The protein resides in the chloroplast. In terms of biological role, usually encoded in the trnK tRNA gene intron. Probably assists in splicing its own and other chloroplast group II introns. This Sequoia sempervirens (California redwood) protein is Maturase K.